A 75-amino-acid polypeptide reads, in one-letter code: U6-lycotoxin-Ls1c (75 aa).

The first 21 residues, 1–21 (MKLLLFTALVLVVISLIEVEA), serve as a signal peptide directing secretion. Positions 22-25 (ENER) are excised as a propeptide. Disulfide bonds link cysteine 27–cysteine 42, cysteine 34–cysteine 47, cysteine 41–cysteine 65, and cysteine 49–cysteine 63.

The protein belongs to the neurotoxin 19 (CSTX) family. 06 (U6-Lctx) subfamily. Expressed by the venom gland.

The protein localises to the secreted. The polypeptide is U6-lycotoxin-Ls1c (Lycosa singoriensis (Wolf spider)).